The following is a 1159-amino-acid chain: PAN2-PAN3 deadenylation complex catalytic subunit pan2 (1159 aa).

The stretch at 276 to 315 (ANVSFMLGIDISPSGEALAINDAECMVHLWGSPAKIHFNE) is one WD repeat. The linker stretch occupies residues 316–451 (MSKEVELADV…GAKLNGEAED (136 aa)). In terms of domain architecture, USP spans 452–821 (DPLLKYSNVE…VPCVLAFQVK (370 aa)). An Exonuclease domain is found at 872–1048 (LDTEFVDLEK…IEDARMALRL (177 aa)). The a divalent metal cation site is built by Asp-873, Glu-875, Asp-982, and Asp-1041. The interval 1094 to 1159 (TAVTMQNTNS…GDFFGGSPLK (66 aa)) is disordered. Over residues 1096–1106 (VTMQNTNSGRN) the composition is skewed to polar residues. Over residues 1107–1128 (TPTVPDAAGAPAVPASAPTTPG) the composition is skewed to low complexity. Gly residues predominate over residues 1143-1153 (TFSGPGAGDFF).

Belongs to the peptidase C19 family. PAN2 subfamily. In terms of assembly, forms a heterotrimer with an asymmetric homodimer of the regulatory subunit pan3 to form the poly(A)-nuclease (PAN) deadenylation complex. A divalent metal cation serves as cofactor.

The protein resides in the cytoplasm. The enzyme catalyses Exonucleolytic cleavage of poly(A) to 5'-AMP.. Positively regulated by the regulatory subunit pan3. Catalytic subunit of the poly(A)-nuclease (PAN) deadenylation complex, one of two cytoplasmic mRNA deadenylases involved in mRNA turnover. PAN specifically shortens poly(A) tails of RNA and the activity is stimulated by poly(A)-binding protein pab1. PAN deadenylation is followed by rapid degradation of the shortened mRNA tails by the CCR4-NOT complex. Deadenylated mRNAs are then degraded by two alternative mechanisms, namely exosome-mediated 3'-5' exonucleolytic degradation, or deadenylation-dependent mRNA decaping and subsequent 5'-3' exonucleolytic degradation by xrn1. May also be involved in post-transcriptional maturation of mRNA poly(A) tails. The sequence is that of PAN2-PAN3 deadenylation complex catalytic subunit pan2 from Aspergillus terreus (strain NIH 2624 / FGSC A1156).